Here is a 349-residue protein sequence, read N- to C-terminus: uncharacterized protein (349 aa).

The signal sequence occupies residues 1-26; it reads MQSHAGGSRAPLGLLLICLCLPGLFA. 2 disordered regions span residues 30–113 and 322–349; these read GAPE…QGMA and YPAGSWGTKGQNRLPPGAKRPGSSGITP. Residues 39-52 show a composition bias toward polar residues; sequence HSGQPSFTSLLNPG. Over residues 90 to 101 the composition is skewed to pro residues; sequence NGPPFWGPPPME.

In terms of assembly, binds to numerous extracellular matrix proteins.

The protein localises to the secreted. It localises to the extracellular space. Its subcellular location is the extracellular matrix. This is an uncharacterized protein from Mus musculus (Mouse).